A 77-amino-acid polypeptide reads, in one-letter code: MKLSVKFLLFLMILPLIAGEDMSDNDAPKSVDVQRNVKRQGQSQFGEQCTGHLDCFGDLCCFDGYCIMTSWIWPCNW.

An N-terminal signal peptide occupies residues 1 to 19 (MKLSVKFLLFLMILPLIAG). A propeptide spanning residues 20 to 37 (EDMSDNDAPKSVDVQRNV) is cleaved from the precursor. Intrachain disulfides connect cysteine 49-cysteine 61, cysteine 55-cysteine 66, and cysteine 60-cysteine 75.

This sequence belongs to the conotoxin I1 superfamily. In terms of tissue distribution, expressed by the venom duct.

The protein localises to the secreted. This Californiconus californicus (California cone) protein is Conotoxin Cl6.15.